Consider the following 489-residue polypeptide: Rhamnulokinase (489 aa).

Position 13–17 (13–17 (ASSGR)) interacts with ATP. C68 and C222 are disulfide-bonded. Substrate-binding positions include G83 and 236–238 (HDT). The Proton acceptor role is filled by D237. ATP is bound at residue T259. N296 is a substrate binding site. ATP is bound at residue Q304. The cysteines at positions 353 and 370 are disulfide-linked. Position 402 (G402) interacts with ATP. C413 and C417 form a disulfide bridge.

This sequence belongs to the rhamnulokinase family. Mg(2+) is required as a cofactor.

The catalysed reaction is L-rhamnulose + ATP = L-rhamnulose 1-phosphate + ADP + H(+). It participates in carbohydrate degradation; L-rhamnose degradation; glycerone phosphate from L-rhamnose: step 2/3. In terms of biological role, involved in the catabolism of L-rhamnose (6-deoxy-L-mannose). Catalyzes the transfer of the gamma-phosphate group from ATP to the 1-hydroxyl group of L-rhamnulose to yield L-rhamnulose 1-phosphate. This Shigella flexneri serotype 5b (strain 8401) protein is Rhamnulokinase.